A 95-amino-acid polypeptide reads, in one-letter code: Small ribosomal subunit protein bS20 (95 aa).

It belongs to the bacterial ribosomal protein bS20 family.

Functionally, binds directly to 16S ribosomal RNA. This Ehrlichia ruminantium (strain Gardel) protein is Small ribosomal subunit protein bS20.